An 88-amino-acid polypeptide reads, in one-letter code: UPF0250 protein Sputcn32_2874 (88 aa).

Belongs to the UPF0250 family.

The sequence is that of UPF0250 protein Sputcn32_2874 from Shewanella putrefaciens (strain CN-32 / ATCC BAA-453).